The following is an 802-amino-acid chain: Elongation factor G, mitochondrial (802 aa).

The N-terminal 24 residues, 1–24 (MRCPSLARLPNRALSGLTRSPVRL), are a transit peptide targeting the mitochondrion. Residues 100 to 387 (SRLRNIGIAA…GVIDYLPNPS (288 aa)) form the tr-type G domain. Residues 109 to 116 (AHIDSGKT), 185 to 189 (DTPGH), and 239 to 242 (NKMD) each bind GTP.

Belongs to the TRAFAC class translation factor GTPase superfamily. Classic translation factor GTPase family. EF-G/EF-2 subfamily.

The protein resides in the mitochondrion. It functions in the pathway protein biosynthesis; polypeptide chain elongation. In terms of biological role, mitochondrial GTPase that catalyzes the GTP-dependent ribosomal translocation step during translation elongation. During this step, the ribosome changes from the pre-translocational (PRE) to the post-translocational (POST) state as the newly formed A-site-bound peptidyl-tRNA and P-site-bound deacylated tRNA move to the P and E sites, respectively. Catalyzes the coordinated movement of the two tRNA molecules, the mRNA and conformational changes in the ribosome. This Aspergillus fumigatus (strain CBS 144.89 / FGSC A1163 / CEA10) (Neosartorya fumigata) protein is Elongation factor G, mitochondrial (mef1).